We begin with the raw amino-acid sequence, 484 residues long: 60S ribosome subunit biogenesis protein NOP8 (484 aa).

The RRM domain maps to 7–83; the sequence is KRIFVGNIFH…NILKVDEAKP (77 aa). S234, S239, and S268 each carry phosphoserine. The tract at residues 260–330 is disordered; sequence DKPMTLNDSD…EGDGQEDNEF (71 aa). A compositionally biased stretch (acidic residues) spans 320–329; it reads DEGDGQEDNE. At S370 the chain carries Phosphoserine.

In terms of assembly, interacts with NIP7 and RRP43. Together with DBP6, URB1, URB2 and RSA3, forms an RNA-independent complex, which is required during early maturation of nascent 60S ribosomal subunits.

It is found in the nucleus. The protein resides in the nucleolus. Its function is as follows. Required for 60S ribosomal subunit synthesis. May be involved in assembly reactions occurring within late pre-ribosomal particles. This Saccharomyces cerevisiae (strain ATCC 204508 / S288c) (Baker's yeast) protein is 60S ribosome subunit biogenesis protein NOP8 (NOP8).